The following is a 249-amino-acid chain: Ditrans,polycis-undecaprenyl-diphosphate synthase ((2E,6E)-farnesyl-diphosphate specific) (249 aa).

The active site involves Asp-18. Asp-18 serves as a coordination point for Mg(2+). Substrate-binding positions include 19 to 22 (GNNR), Phe-23, Lys-31, His-35, and 63 to 65 (SSE). The active-site Proton acceptor is Asn-66. Substrate is bound by residues Trp-67, Arg-69, Arg-186, and 192–194 (RLS). Position 205 (Glu-205) interacts with Mg(2+).

It belongs to the UPP synthase family. In terms of assembly, homodimer. The cofactor is Mg(2+).

The enzyme catalyses 8 isopentenyl diphosphate + (2E,6E)-farnesyl diphosphate = di-trans,octa-cis-undecaprenyl diphosphate + 8 diphosphate. Catalyzes the sequential condensation of isopentenyl diphosphate (IPP) with (2E,6E)-farnesyl diphosphate (E,E-FPP) to yield (2Z,6Z,10Z,14Z,18Z,22Z,26Z,30Z,34E,38E)-undecaprenyl diphosphate (di-trans,octa-cis-UPP). UPP is the precursor of glycosyl carrier lipid in the biosynthesis of bacterial cell wall polysaccharide components such as peptidoglycan and lipopolysaccharide. This chain is Ditrans,polycis-undecaprenyl-diphosphate synthase ((2E,6E)-farnesyl-diphosphate specific), found in Acinetobacter baylyi (strain ATCC 33305 / BD413 / ADP1).